Here is a 258-residue protein sequence, read N- to C-terminus: MSSLLEKTRQLNKILQKSGAEPVVFDDICNLLSEVLSCNVYIISKKGKILGYDLSTGFECQTVRDKVVPEKRFPEHYNNKLLNVHGTKSNLENQGECVFESGEDCGVKNKLTTIVPINGNRERLGTLLLARFDVPFTDDDLIISEYSATIIGLEILRSKQDEIEEEARKKAVVQLAIGTLSYSELEAVEHIFNELDGPEGLLVASKIADKVGITRSVIVNALRKFESAGVIESRSLGMKGTHIKILNDRLLEELKKIK.

Residues 1-156 form a GAF domain region; sequence MSSLLEKTRQ…SATIIGLEIL (156 aa). The H-T-H motif DNA-binding region spans 204–223; sequence ASKIADKVGITRSVIVNALR.

It belongs to the CodY family.

The protein localises to the cytoplasm. Functionally, DNA-binding global transcriptional regulator which is involved in the adaptive response to starvation and acts by directly or indirectly controlling the expression of numerous genes in response to nutrient availability. During rapid exponential growth, CodY is highly active and represses genes whose products allow adaptation to nutrient depletion. This Clostridium tetani (strain Massachusetts / E88) protein is Global transcriptional regulator CodY.